The following is a 313-amino-acid chain: FAM172 family protein homolog Y75B8A.31 (313 aa).

A disordered region spans residues 293 to 313; sequence VKSENSKESDDEAPKSKKICV. The segment covering 296 to 307 has biased composition (basic and acidic residues); that stretch reads ENSKESDDEAPK.

It belongs to the FAM172 family.

This chain is FAM172 family protein homolog Y75B8A.31, found in Caenorhabditis elegans.